Here is an 804-residue protein sequence, read N- to C-terminus: Phenylalanine--tRNA ligase beta subunit (804 aa).

The tRNA-binding domain maps to 40-155 (DRGMKGVVIG…SDAPIGADAI (116 aa)). Residues 409 to 484 (QDSVVVTVTL…RLYGYDRLPA (76 aa)) form the B5 domain. Residues aspartate 462, aspartate 468, glutamate 471, and glutamate 472 each coordinate Mg(2+). Residues 710-803 (PRFPSVVRDI…VEKQFGAVLR (94 aa)) enclose the FDX-ACB domain.

It belongs to the phenylalanyl-tRNA synthetase beta subunit family. Type 1 subfamily. In terms of assembly, tetramer of two alpha and two beta subunits. It depends on Mg(2+) as a cofactor.

The protein localises to the cytoplasm. It catalyses the reaction tRNA(Phe) + L-phenylalanine + ATP = L-phenylalanyl-tRNA(Phe) + AMP + diphosphate + H(+). This chain is Phenylalanine--tRNA ligase beta subunit, found in Geobacillus kaustophilus (strain HTA426).